The primary structure comprises 798 residues: Protocadherin beta-10 (798 aa).

Positions 1–26 (MAVRELCFSRQRQVLFLFLFWGVSLA) are cleaved as a signal peptide. Topologically, residues 27 to 690 (GSGFGRYSVT…AQADLLTVYL (664 aa)) are extracellular. 5 Cadherin domains span residues 35-133 (VTEE…APVF), 138-242 (TVLK…APQF), 247-347 (YETQ…PPEL), 352-451 (FSNS…APAF), and 456-561 (YTLF…SPFV). Asparagine 169 is a glycosylation site (N-linked (GlcNAc...) asparagine). Residues asparagine 418 and asparagine 436 are each glycosylated (N-linked (GlcNAc...) asparagine). N-linked (GlcNAc...) asparagine glycosylation is present at asparagine 567. A Cadherin 6 domain is found at 568–671 (GSAPCTELVP…LVDGFSQPYL (104 aa)). A helical membrane pass occupies residues 691-711 (VVALASVSSLFLFSVLLFVAV). The Cytoplasmic segment spans residues 712-798 (RLCRRSRAAS…FRNSFGFNIQ (87 aa)).

It localises to the cell membrane. Its function is as follows. Potential calcium-dependent cell-adhesion protein. May be involved in the establishment and maintenance of specific neuronal connections in the brain. This chain is Protocadherin beta-10 (PCDHB10), found in Pan troglodytes (Chimpanzee).